The chain runs to 357 residues: Leucoanthocyanidin dioxygenase (357 aa).

A Fe2OG dioxygenase domain is found at 212–311 (LLLQMKINYY…RISWAVFCEP (100 aa)). 3 residues coordinate Fe cation: His236, Asp238, and His292.

This sequence belongs to the iron/ascorbate-dependent oxidoreductase family. The cofactor is Fe cation. L-ascorbate serves as cofactor.

The catalysed reaction is a (2R,3S,4S)-leucoanthocyanidin + 2-oxoglutarate + O2 = a 4-H-anthocyanidin with a 3-hydroxy group + succinate + CO2 + 2 H2O. The protein operates within pigment biosynthesis; anthocyanin biosynthesis. Oxidation of leucoanthocyanidins into anthocyanidins. The sequence is that of Leucoanthocyanidin dioxygenase (ANS) from Malus domestica (Apple).